The following is a 531-amino-acid chain: MSGRGAGGFPLPPLSPGGGAVAAALGAPPPPAGPGMLPSPALRGPGPSGGMGVPGAAAFRPMGPAGPAAQYQRPGMSPGSRMPMAGLQVGPPAGSPFGTAAPLRPGMPPTMMDPFRKRLLVPQAQPPMPAQRRGLKRRKMADKVLPQRIRELVPESQAYMDLLAFERKLDQTIARKRMEIQEAIKKPLTQKRKLRIYISNTFSPSKADGDNAGTAGTPGGTPAADKVASWELRVEGKLLDDPSKQKRKFSSFFKSLVIELDKELYGPDNHLVEWHRMPTTQETDGFQVKRPGDLNVKCTLLLMLDHQPPQYKLDPRLARLLGVHTQTRAAIMQALWLYIKHNQLQDGHEREYINCNRYFRQIFSCGRLRFSEIPMKLAGLLQHPDPIVINHVISVDPNDQKKTACYDIDVEVDDPLKAQMSNFLASTTNQQEIASLDVKIHETIESINQLKTQRDFMLSFSTEPQDFIQEWLRSQRRDLKIITDVIGNPEEERRAAFYHQPWAQEAVGRHIFAKVQQRRQELEQVLGIRLT.

Residues 20–85 (AVAAALGAPP…MSPGSRMPMA (66 aa)) are disordered. A compositionally biased stretch (low complexity) spans 34-45 (PGMLPSPALRGP). Residues Arg81 and Arg104 each carry the asymmetric dimethylarginine modification. Position 203 is a phosphoserine (Ser203). The tract at residues 205–226 (SKADGDNAGTAGTPGGTPAADK) is disordered. Positions 210-225 (DNAGTAGTPGGTPAAD) are enriched in low complexity. Residue Thr217 is modified to Phosphothreonine. Residue Lys226 forms a Glycyl lysine isopeptide (Lys-Gly) (interchain with G-Cter in SUMO2) linkage. The SWIB/MDM2 domain occupies 306–383 (HQPPQYKLDP…PMKLAGLLQH (78 aa)).

It belongs to the SMARCD family. As to quaternary structure, component of the multiprotein chromatin-remodeling complexes SWI/SNF: SWI/SNF-A (BAF), SWI/SNF-B (PBAF) and related complexes. The canonical complex contains a catalytic subunit (either SMARCA4/BRG1/BAF190A or SMARCA2/BRM/BAF190B), and at least SMARCE1, ACTL6A/BAF53, SMARCC1/BAF155, SMARCC2/BAF170, and SMARCB1/SNF5/BAF47. Other subunits specific to each of the complexes may also be present permitting several possible combinations developmentally and tissue specific. Component of the BAF complex, which includes at least actin (ACTB), ARID1A/BAF250A, ARID1B/BAF250B, SMARCA2/BRM, SMARCA4/BRG1, ACTL6A/BAF53, ACTL6B/BAF53B, SMARCE1/BAF57, SMARCC1/BAF155, SMARCC2/BAF170, SMARCB1/SNF5/INI1, and one or more SMARCD1/BAF60A, SMARCD2/BAF60B, or SMARCD3/BAF60C. In muscle cells, the BAF complex also contains DPF3. Component of the SWI/SNF-B (PBAF) chromatin remodeling complex, at least composed of SMARCA4/BRG1, SMARCB1/BAF47/SNF5, ACTL6A/BAF53A or ACTL6B/BAF53B, SMARCE1/BAF57, SMARCD1/BAF60A, SMARCD2/BAF60B, perhaps SMARCD3/BAF60C, SMARCC1/BAF155, SMARCC2/BAF170, PBRM1/BAF180, ARID2/BAF200 and actin (ACTB). Interacts with UNKL. Interacts with CEBPE. Ubiquitinated through a signaling process involving RAC1 and the RING finger protein UNKL.

It localises to the nucleus. Functionally, involved in transcriptional activation and repression of select genes by chromatin remodeling (alteration of DNA-nucleosome topology). Component of SWI/SNF chromatin remodeling complexes that carry out key enzymatic activities, changing chromatin structure by altering DNA-histone contacts within a nucleosome in an ATP-dependent manner. Critical regulator of myeloid differentiation, controlling granulocytopoiesis and the expression of genes involved in neutrophil granule formation. This Mus musculus (Mouse) protein is SWI/SNF-related matrix-associated actin-dependent regulator of chromatin subfamily D member 2 (Smarcd2).